Consider the following 422-residue polypeptide: Monoacylglycerol lipase ABHD2 (422 aa).

The Cytoplasmic segment spans residues Met1–Glu15. A helical; Signal-anchor for type II membrane protein membrane pass occupies residues Met16 to Val36. The Extracellular portion of the chain corresponds to Arg37–Glu422. Residues Met134 to Gly385 enclose the AB hydrolase-1 domain. Asn142 carries an N-linked (GlcNAc...) asparagine glycan. Ser213 functions as the Nucleophile in the catalytic mechanism. Asn285, Asn335, and Asn344 each carry an N-linked (GlcNAc...) asparagine glycan. Catalysis depends on charge relay system residues Asp348 and His379.

The protein belongs to the AB hydrolase superfamily. AB hydrolase 4 family.

The protein localises to the cell membrane. It catalyses the reaction Hydrolyzes glycerol monoesters of long-chain fatty acids.. The enzyme catalyses an acetyl ester + H2O = an aliphatic alcohol + acetate + H(+). It carries out the reaction a triacylglycerol + H2O = a diacylglycerol + a fatty acid + H(+). The catalysed reaction is 2-(5Z,8Z,11Z,14Z-eicosatetraenoyl)-glycerol + H2O = glycerol + (5Z,8Z,11Z,14Z)-eicosatetraenoate + H(+). It catalyses the reaction a butanoate ester + H2O = an aliphatic alcohol + butanoate + H(+). The enzyme catalyses hexadecanoate ester + H2O = an aliphatic alcohol + hexadecanoate + H(+). Its activity is regulated as follows. Acylglycerol lipase activity is activated upon binding to progesterone. Its function is as follows. Progesterone-dependent acylglycerol lipase that catalyzes hydrolysis of endocannabinoid arachidonoylglycerol (AG) from cell membrane. Acts as a progesterone receptor: progesterone-binding activates the acylglycerol lipase activity, mediating degradation of 1-arachidonoylglycerol (1AG) and 2-arachidonoylglycerol (2AG) to glycerol and arachidonic acid (AA). Also displays an ester hydrolase activity against acetyl ester, butanoate ester and hexadecanoate ester. Plays a key role in sperm capacitation in response to progesterone by mediating degradation of 2AG, an inhibitor of the sperm calcium channel CatSper, leading to calcium influx via CatSper and sperm activation. May also play a role in smooth muscle cells migration. In Danio rerio (Zebrafish), this protein is Monoacylglycerol lipase ABHD2 (abhd2b).